A 92-amino-acid polypeptide reads, in one-letter code: YcgL domain-containing protein HS_0805 (92 aa).

The YcgL domain maps to 1–85; that stretch reads MLCAIYKTKR…QQENLLEQER (85 aa).

This chain is YcgL domain-containing protein HS_0805, found in Histophilus somni (strain 129Pt) (Haemophilus somnus).